Here is a 222-residue protein sequence, read N- to C-terminus: Kunitz trypsin inhibitor 3 (222 aa).

The first 23 residues, 1 to 23 (MEKLTLSFITLTVLSAIFTAASA), serve as a signal peptide directing secretion. The N-linked (GlcNAc...) asparagine glycan is linked to N65. Intrachain disulfides connect C72-C119 and C165-C173. N175 carries N-linked (GlcNAc...) asparagine glycosylation.

The protein belongs to the protease inhibitor I3 (leguminous Kunitz-type inhibitor) family.

Functionally, exhibits Kunitz trypsin protease inhibitor activity. This chain is Kunitz trypsin inhibitor 3, found in Arabidopsis thaliana (Mouse-ear cress).